The following is a 1145-amino-acid chain: Adenylate cyclase type 3 (1145 aa).

Residues 1–79 (MPRNQGFSDP…FKRQRHETLL (79 aa)) lie on the Cytoplasmic side of the membrane. The next 5 helical transmembrane spans lie at 80–100 (VLVVFAALFDCYVVVMCAVVF), 105–125 (LAPLMVAGFGLVLDIILFVLC), 139–159 (VPYLLWLLISAQIFSYLGLNF), 173–193 (AFFVFSFFITLPLSLSPIVII), and 226–246 (ILANVFLYLCAIIVGIMSYYM). Mg(2+) contacts are provided by aspartate 324, isoleucine 325, and aspartate 368. ATP-binding positions include 324 to 329 (DIVGFT) and 366 to 368 (LGD). Residues 381-401 (EDHAVCSILMGLAMVEAISYV) traverse the membrane as a helical segment. The Cytoplasmic portion of the chain corresponds to 402–631 (REKTKTGVDM…RYSVEKEKQS (230 aa)). Arginine 412 contributes to the ATP binding site. Lysine 465 is covalently cross-linked (Glycyl lysine isopeptide (Lys-Gly) (interchain with G-Cter in SUMO3)). The disordered stretch occupies residues 504–564 (QNGLNGSAVP…DNPSFPNPRR (61 aa)). Composition is skewed to low complexity over residues 516–526 (APASSKPSSPA) and 535–544 (GSAHASGSTS). At serine 524 the chain carries Phosphoserine. Position 579 is a phosphoserine (serine 579). 3 helical membrane-spanning segments follow: residues 632–652 (GAAFSCSCVVLFCTAMVEILI), 663–683 (FVVGEVLLLILTICSMAAIFP), and 707–727 (WAMLAIFILVMANVVDMLSCL). The N-linked (GlcNAc...) asparagine glycan is linked to asparagine 735. 3 helical membrane-spanning segments follow: residues 753–773 (YNYVAVLSLIATIMLVQVSHM), 774–794 (VKLTLMLLVTGAVTALNLYAW), and 834–854 (LPLVPSKYSMTVMMFVMMLSF). The Cytoplasmic portion of the chain corresponds to 855-1145 (YYFSRHVEKL…TLPHQVVDNP (291 aa)). Residues lysine 976, 1063 to 1065 (DIW), and 1070 to 1074 (NVASR) each bind ATP. Residue serine 1077 is modified to Phosphoserine; by CaMK2. Residue lysine 1110 coordinates ATP.

This sequence belongs to the adenylyl cyclase class-4/guanylyl cyclase family. It depends on Mg(2+) as a cofactor. Mn(2+) serves as cofactor. N-glycosylated. In terms of processing, rapidly phosphorylated after stimulation by odorants or forskolin. Phosphorylation by CaMK2 at Ser-1077 down-regulates enzyme activity. Post-translationally, sumoylated. Sumoylation is required for targeting of olfactory cilia. In terms of tissue distribution, detected in the acrosomal region of epididymal spermatozoa, the acrosomal region of round spermatids and in elongating spermatids. Detected in cilia in the olfactory epithelium (at protein level). Detected in olfactory epithelium neurons. Detected in brain, testis, late pachytene spermatocytes, round spermatids and elongating spermatids.

Its subcellular location is the cell membrane. The protein localises to the cell projection. It localises to the cilium. The protein resides in the golgi apparatus. It is found in the cytoplasm. The catalysed reaction is ATP = 3',5'-cyclic AMP + diphosphate. Specifically activated by the G alpha protein GNAL/G(olf) in signaling cascades triggered by odorant receptors. Activated by forskolin. After forskolin treatment, activity is further increased by calcium/calmodulin. In the absence of forskolin, calcium/calmodulin has little effect on enzyme activity. Its function is as follows. Catalyzes the formation of the signaling molecule cAMP in response to G-protein signaling. Participates in signaling cascades triggered by odorant receptors via its function in cAMP biosynthesis: specifically activated by G alpha protein GNAL/G(olf) in olfactory epithelium. Required for the perception of odorants. Required for normal sperm motility and normal male fertility. Plays a role in regulating insulin levels and body fat accumulation in response to a high fat diet. This is Adenylate cyclase type 3 (Adcy3) from Mus musculus (Mouse).